Reading from the N-terminus, the 202-residue chain is ATP-dependent Clp protease proteolytic subunit (202 aa).

Ser106 (nucleophile) is an active-site residue. His131 is an active-site residue.

The protein belongs to the peptidase S14 family. In terms of assembly, fourteen ClpP subunits assemble into 2 heptameric rings which stack back to back to give a disk-like structure with a central cavity, resembling the structure of eukaryotic proteasomes.

It localises to the cytoplasm. The enzyme catalyses Hydrolysis of proteins to small peptides in the presence of ATP and magnesium. alpha-casein is the usual test substrate. In the absence of ATP, only oligopeptides shorter than five residues are hydrolyzed (such as succinyl-Leu-Tyr-|-NHMec, and Leu-Tyr-Leu-|-Tyr-Trp, in which cleavage of the -Tyr-|-Leu- and -Tyr-|-Trp bonds also occurs).. Cleaves peptides in various proteins in a process that requires ATP hydrolysis. Has a chymotrypsin-like activity. Plays a major role in the degradation of misfolded proteins. This is ATP-dependent Clp protease proteolytic subunit from Verminephrobacter eiseniae (strain EF01-2).